We begin with the raw amino-acid sequence, 396 residues long: Elongation factor Tu (396 aa).

The tr-type G domain maps to 10–206 (KPHCNIGTIG…QVDAYIPQPE (197 aa)). The interval 19-26 (GHVDHGKT) is G1. GTP is bound at residue 19–26 (GHVDHGKT). Residue Thr-26 coordinates Mg(2+). The interval 60 to 64 (GITIS) is G2. The tract at residues 81–84 (DCPG) is G3. Residues 81-85 (DCPGH) and 136-139 (NKVD) contribute to the GTP site. The G4 stretch occupies residues 136–139 (NKVD). The segment at 174 to 176 (SAL) is G5.

It belongs to the TRAFAC class translation factor GTPase superfamily. Classic translation factor GTPase family. EF-Tu/EF-1A subfamily. Monomer.

It localises to the cytoplasm. It carries out the reaction GTP + H2O = GDP + phosphate + H(+). GTP hydrolase that promotes the GTP-dependent binding of aminoacyl-tRNA to the A-site of ribosomes during protein biosynthesis. The polypeptide is Elongation factor Tu (Gluconobacter oxydans (strain 621H) (Gluconobacter suboxydans)).